The following is a 514-amino-acid chain: Putative binding protein HI_0213 (514 aa).

The N-terminal stretch at 1-23 (MNNLFALCQRSAVIFSIIFTVVA) is a signal peptide. C24 carries N-palmitoyl cysteine lipidation. C24 is lipidated: S-diacylglycerol cysteine.

This sequence belongs to the bacterial solute-binding protein 5 family.

Its subcellular location is the cell membrane. Functionally, part of a binding-protein-dependent transport system. The chain is Putative binding protein HI_0213 from Haemophilus influenzae (strain ATCC 51907 / DSM 11121 / KW20 / Rd).